Consider the following 418-residue polypeptide: F-box protein At1g10780 (418 aa).

The F-box domain occupies 1 to 47; it reads MDSLPDAILQYILSYLTSARDVAACNCVSKRWKESTDSVKSVVFHRN.

The polypeptide is F-box protein At1g10780 (Arabidopsis thaliana (Mouse-ear cress)).